Reading from the N-terminus, the 845-residue chain is Proto-oncogene vav (845 aa).

The 119-residue stretch at 1 to 119 (MELWRQCTHW…YTLSALSWTP (119 aa)) folds into the Calponin-homology (CH) domain. In terms of domain architecture, DH spans 194–373 (KRCCCLREIQ…RDLAQCVNEV (180 aa)). The 103-residue stretch at 402–504 (RPKIDGELKI…WMEQFEMAIS (103 aa)) folds into the PH domain. A Phorbol-ester/DAG-type zinc finger spans residues 515 to 564 (GHDFQMFSFEETTSCKACQMLLRGTFYQGYRCYRCRAPAHKECLGRVPPC). An SH3 1 domain is found at 592 to 660 (LGLPKMEVFQ…PCNRVHPYVH (69 aa)). The SH2 domain occupies 671-765 (WYAGPMERAG…SLDTTLQFPY (95 aa)). In terms of domain architecture, SH3 2 spans 782–842 (KYFGTAKARY…PSNYVEEDYS (61 aa)). Phosphotyrosine occurs at positions 826 and 844.

As to quaternary structure, interacts with SHB. Interacts with APS, DOCK2, GRB2, GRB3, DOCK2, SLA, TEC and ZNF655/VIK. Interacts with SIAH2; without leading to its degradation. Associates with BLNK, PLCG1, GRB2 and NCK1 in a B-cell antigen receptor-dependent fashion. Interacts with CBLB; which inhibits tyrosine phosphorylation and down-regulates activity. May interact with CCPG1. Interacts with CLNK. Interacts with THEMIS2. Interacts with NEK3 and this interaction is prolactin-dependent. Interacts with ITK. Interacts with PTK2B/PYK2. Interacts with HCK. Interacts with PTK2B/PYK2. Interacts (via SH2 domain) with SYK. Interacts with ANKRD54. Interacts with CD6. Interacts with isoform 2 of CRACR2A. Interacts with LCP2; this interaction plays a role in TCR-mediated cytokine production. In terms of processing, phosphorylated by FYN. Phosphorylated on tyrosine residues by HCK in response to IFNG and bacterial lipopolysaccharide (LPS). As to expression, widely expressed in hematopoietic cells but not in other cell types. Found in the spleen and lung.

Couples tyrosine kinase signals with the activation of the Rho/Rac GTPases, thus leading to cell differentiation and/or proliferation. This chain is Proto-oncogene vav (Vav1), found in Mus musculus (Mouse).